Reading from the N-terminus, the 181-residue chain is MSSLIASRRYAWALLSAAEEGQFLDQATDALNSIKETLANSRDLVHVLRSPLINGDKKTHILEEVFKEIAGEKVMIFLRLLAHKKRAGQLPEIIGEYQKLLDEKNGVINVSINSAVMLSDEQAKDLVNKLANYTGKKVRAKMKLEEALLGGVTVKIEDTIIDGSVRHQLQMMKKFLLAGKL.

This sequence belongs to the ATPase delta chain family. As to quaternary structure, F-type ATPases have 2 components, F(1) - the catalytic core - and F(0) - the membrane proton channel. F(1) has five subunits: alpha(3), beta(3), gamma(1), delta(1), epsilon(1). F(0) has three main subunits: a(1), b(2) and c(10-14). The alpha and beta chains form an alternating ring which encloses part of the gamma chain. F(1) is attached to F(0) by a central stalk formed by the gamma and epsilon chains, while a peripheral stalk is formed by the delta and b chains.

It is found in the cell inner membrane. F(1)F(0) ATP synthase produces ATP from ADP in the presence of a proton or sodium gradient. F-type ATPases consist of two structural domains, F(1) containing the extramembraneous catalytic core and F(0) containing the membrane proton channel, linked together by a central stalk and a peripheral stalk. During catalysis, ATP synthesis in the catalytic domain of F(1) is coupled via a rotary mechanism of the central stalk subunits to proton translocation. In terms of biological role, this protein is part of the stalk that links CF(0) to CF(1). It either transmits conformational changes from CF(0) to CF(1) or is implicated in proton conduction. The protein is ATP synthase subunit delta of Chlorobium limicola (strain DSM 245 / NBRC 103803 / 6330).